Consider the following 335-residue polypeptide: NADH-quinone oxidoreductase subunit H (335 aa).

Transmembrane regions (helical) follow at residues Val-11–Leu-31, Val-81–Ile-101, Ile-114–Gly-134, Val-154–Phe-174, Leu-187–Val-207, Phe-238–Phe-258, Gln-270–Leu-290, and Phe-309–Thr-329.

This sequence belongs to the complex I subunit 1 family. In terms of assembly, NDH-1 is composed of 13 different subunits. Subunits NuoA, H, J, K, L, M, N constitute the membrane sector of the complex.

The protein localises to the cell inner membrane. The catalysed reaction is a quinone + NADH + 5 H(+)(in) = a quinol + NAD(+) + 4 H(+)(out). Its function is as follows. NDH-1 shuttles electrons from NADH, via FMN and iron-sulfur (Fe-S) centers, to quinones in the respiratory chain. The immediate electron acceptor for the enzyme in this species is believed to be ubiquinone. Couples the redox reaction to proton translocation (for every two electrons transferred, four hydrogen ions are translocated across the cytoplasmic membrane), and thus conserves the redox energy in a proton gradient. This subunit may bind ubiquinone. The sequence is that of NADH-quinone oxidoreductase subunit H from Pseudomonas fluorescens (strain SBW25).